The sequence spans 99 residues: Nucleoid-associated protein SUB1611 (99 aa).

This sequence belongs to the YbaB/EbfC family. As to quaternary structure, homodimer.

The protein resides in the cytoplasm. It is found in the nucleoid. In terms of biological role, binds to DNA and alters its conformation. May be involved in regulation of gene expression, nucleoid organization and DNA protection. The sequence is that of Nucleoid-associated protein SUB1611 from Streptococcus uberis (strain ATCC BAA-854 / 0140J).